Reading from the N-terminus, the 294-residue chain is UDP-3-O-acyl-N-acetylglucosamine deacetylase (294 aa).

Zn(2+)-binding residues include His75, His232, and Asp236. Catalysis depends on His259, which acts as the Proton donor.

This sequence belongs to the LpxC family. Requires Zn(2+) as cofactor.

The catalysed reaction is a UDP-3-O-[(3R)-3-hydroxyacyl]-N-acetyl-alpha-D-glucosamine + H2O = a UDP-3-O-[(3R)-3-hydroxyacyl]-alpha-D-glucosamine + acetate. It participates in glycolipid biosynthesis; lipid IV(A) biosynthesis; lipid IV(A) from (3R)-3-hydroxytetradecanoyl-[acyl-carrier-protein] and UDP-N-acetyl-alpha-D-glucosamine: step 2/6. Functionally, catalyzes the hydrolysis of UDP-3-O-myristoyl-N-acetylglucosamine to form UDP-3-O-myristoylglucosamine and acetate, the committed step in lipid A biosynthesis. The sequence is that of UDP-3-O-acyl-N-acetylglucosamine deacetylase from Campylobacter jejuni subsp. jejuni serotype O:2 (strain ATCC 700819 / NCTC 11168).